Reading from the N-terminus, the 261-residue chain is MTARAAGGSASRANEYADVPEMFRELVGLPAGSPEFQRHRDKIVQRCLPLADHIARRFEGRGEPRDDLIQVARVGLVNAAVRFDVKTGSDFVSFAVPTIMGEVRRHFRDNSWSVKVPRRLKELHLRLGTATADLSQRLGRAPSASELAAELGMDRAEVIEGLLAGSSYHTLSIDSGGGSDDDARAITDTLGDVDAGLDQIENREVLRPLLEALPERERTVLVLRFFDSMTQTQIAERVGISQMHVSRLLAKSLARLRDQLE.

The sigma-70 factor domain-2 stretch occupies residues 43 to 112 (IVQRCLPLAD…VRRHFRDNSW (70 aa)). Residues 67–70 (DLIQ) carry the Interaction with polymerase core subunit RpoC motif. The interval 123–189 (LHLRLGTATA…DDDARAITDT (67 aa)) is sigma-70 factor domain-3. The segment at 209 to 258 (LLEALPERERTVLVLRFFDSMTQTQIAERVGISQMHVSRLLAKSLARLRD) is sigma-70 factor domain-4. Residues 231-250 (QTQIAERVGISQMHVSRLLA) constitute a DNA-binding region (H-T-H motif).

Belongs to the sigma-70 factor family. As to quaternary structure, monomer. Interacts transiently with the RNA polymerase catalytic core formed by RpoA, RpoB, RpoC and RpoZ (2 alpha, 1 beta, 1 beta' and 1 omega subunit) to form the RNA polymerase holoenzyme that can initiate transcription. Interacts (via sigma-70 factor domain 4) with anti-sigma-F factor RsbW (UsfX).

In terms of biological role, sigma factors are initiation factors that promote the attachment of RNA polymerase to specific initiation sites and are then released. Held in an inactive form by a cognate anti-sigma factor RsbW (UsfX) until released. Its regulon, determined following disruption, consists of 38 genes decreased in exponential phase, 187 genes decreased in early S-phase, and 277 genes decreased in late S-phase. The polypeptide is RNA polymerase sigma factor SigF (sigF) (Mycobacterium tuberculosis (strain CDC 1551 / Oshkosh)).